A 186-amino-acid chain; its full sequence is Periplasmic nitrate reductase, electron transfer subunit (186 aa).

A signal peptide spans 1 to 20 (MKTSKLNFLTLVASTGLALA). Positions 87, 102, 105, 106, 123, 144, 147, and 148 each coordinate heme c.

It belongs to the NapB family. In terms of assembly, component of the periplasmic nitrate reductase NapAB complex composed of NapA and NapB. In terms of processing, binds 2 heme C groups per subunit.

It localises to the periplasm. Functionally, electron transfer subunit of the periplasmic nitrate reductase complex NapAB. Transfers electrons to NapA subunit, thus allowing electron flow between membrane and periplasm. Essential for periplasmic nitrate reduction with nitrate as the terminal electron acceptor. The sequence is that of Periplasmic nitrate reductase, electron transfer subunit from Wolinella succinogenes (strain ATCC 29543 / DSM 1740 / CCUG 13145 / JCM 31913 / LMG 7466 / NCTC 11488 / FDC 602W) (Vibrio succinogenes).